The sequence spans 432 residues: Ribosome biogenesis protein WDR12 homolog (432 aa).

The interval 13-97 (LQIRLVALNK…ESVIEVVYFQ (85 aa)) is ubiquitin-like (UBL) domain. WD repeat units lie at residues 109 to 146 (LHSD…YAIF), 148 to 190 (GHES…KSVE), 197 to 236 (GHTQ…KDDD), 265 to 303 (GHTD…NKSD), 305 to 345 (NVNK…DQTV), 352 to 392 (SHKN…APLY), and 396 to 432 (GHED…AQRS).

It belongs to the WD repeat WDR12/YTM1 family.

It is found in the nucleus. Its subcellular location is the nucleolus. The protein localises to the nucleoplasm. Functionally, required for maturation of ribosomal RNAs and formation of the large ribosomal subunit. In Trichoplax adhaerens (Trichoplax reptans), this protein is Ribosome biogenesis protein WDR12 homolog.